The sequence spans 435 residues: Gamma-glutamyl phosphate reductase (435 aa).

This sequence belongs to the gamma-glutamyl phosphate reductase family.

It is found in the cytoplasm. It carries out the reaction L-glutamate 5-semialdehyde + phosphate + NADP(+) = L-glutamyl 5-phosphate + NADPH + H(+). It functions in the pathway amino-acid biosynthesis; L-proline biosynthesis; L-glutamate 5-semialdehyde from L-glutamate: step 2/2. In terms of biological role, catalyzes the NADPH-dependent reduction of L-glutamate 5-phosphate into L-glutamate 5-semialdehyde and phosphate. The product spontaneously undergoes cyclization to form 1-pyrroline-5-carboxylate. This chain is Gamma-glutamyl phosphate reductase, found in Synechococcus sp. (strain CC9605).